We begin with the raw amino-acid sequence, 189 residues long: Riboflavin kinase (189 aa).

Mg(2+)-binding residues include Thr-42 and Asn-44. Catalysis depends on Glu-124, which acts as the Nucleophile.

Belongs to the flavokinase family. Zn(2+) serves as cofactor. Mg(2+) is required as a cofactor.

It catalyses the reaction riboflavin + ATP = FMN + ADP + H(+). It functions in the pathway cofactor biosynthesis; FMN biosynthesis; FMN from riboflavin (ATP route): step 1/1. Its function is as follows. Catalyzes the phosphorylation of riboflavin (vitamin B2) to form flavin mononucleotide (FMN) coenzyme. This Candida glabrata (strain ATCC 2001 / BCRC 20586 / JCM 3761 / NBRC 0622 / NRRL Y-65 / CBS 138) (Yeast) protein is Riboflavin kinase (FMN1).